The primary structure comprises 403 residues: G-protein coupled receptor family C group 5 member B (403 aa).

The signal sequence occupies residues 1–28; sequence MFVASERKMRAHQVLTFLLLFVITSVAS. Residues 29 to 56 lie on the Extracellular side of the membrane; sequence ENASTSRGCGLDLLPQYVSLCDLDAIWG. The N-linked (GlcNAc...) asparagine glycan is linked to asparagine 30. A helical membrane pass occupies residues 57–77; that stretch reads IVVEAVAGAGALITLLLMLIL. Over 78–94 the chain is Cytoplasmic; that stretch reads LVRLPFIKEKEKKSPVG. Residues 95–115 form a helical membrane-spanning segment; the sequence is LHFLFLLGTLGLFGLTFAFII. Residues 116–126 lie on the Extracellular side of the membrane; sequence QEDETICSVRR. The helical transmembrane segment at 127 to 147 threads the bilayer; the sequence is FLWGVLFALCFSCLLSQAWRV. The Cytoplasmic portion of the chain corresponds to 148–162; the sequence is RRLVRHGTGPAGWQL. A helical transmembrane segment spans residues 163–183; sequence VGLALCLMLVQVIIAVEWLVL. Over 184–199 the chain is Extracellular; sequence TVLRDTRPACAYEPMD. A helical membrane pass occupies residues 200 to 220; sequence FVMALIYDMVLLVVTLGLALF. The Cytoplasmic portion of the chain corresponds to 221–234; sequence TLCGKFKRWKLNGA. The helical transmembrane segment at 235-255 threads the bilayer; the sequence is FLLITAFLSVLIWVAWMTMYL. Topologically, residues 256-271 are extracellular; that stretch reads FGNVKLQQGDAWNDPT. A helical membrane pass occupies residues 272–292; that stretch reads LAITLAASGWVFVIFHAIPEI. The Cytoplasmic segment spans residues 293-403; sequence HCTLLPALQE…PPSHTGRHLW (111 aa). The tract at residues 349 to 371 is disordered; it reads GFPNGSLGKRPSGSLGKRPSAPF. Phosphoserine is present on serine 354.

It belongs to the G-protein coupled receptor 3 family. In terms of tissue distribution, expression is high in kidney, pancreas, and testis, medium in brain, heart, prostate, small intestine, and spleen, low in liver, placenta, skeletal muscle, colon, ovary, and thymus, and not detectable in lung and peripheral leukocyte. According to PubMed:10945465, highly expressed in most brain areas examined, with the highest levels observed in corpus callosum, caudate nucleus, putamen, substantia nigra, thalamus, hippocampus, and spinal cord as well as in dorsal root ganglia (DRG). Expressed in glia limitans, ependymal cells, astrocyte cell bodies, the perivascular region in astrocyte endfeet, but not in neurons. In the periphery, expression levels are relatively low, compared to the CNS, with the strongest expression detected in pancreas, testis, uterus, and stomach.

The protein localises to the cell membrane. It localises to the cytoplasmic vesicle membrane. In terms of biological role, G-protein coupled receptor involved in the regulation of cell volume. This chain is G-protein coupled receptor family C group 5 member B (GPRC5B), found in Homo sapiens (Human).